The primary structure comprises 519 residues: Exodeoxyribonuclease 7 large subunit (519 aa).

The segment at 493-519 is disordered; it reads AISTGKSSNTNRKSAPAREPGKQGSLF. Residues 496-505 are compositionally biased toward polar residues; sequence TGKSSNTNRK.

This sequence belongs to the XseA family. In terms of assembly, heterooligomer composed of large and small subunits.

The protein localises to the cytoplasm. It catalyses the reaction Exonucleolytic cleavage in either 5'- to 3'- or 3'- to 5'-direction to yield nucleoside 5'-phosphates.. Bidirectionally degrades single-stranded DNA into large acid-insoluble oligonucleotides, which are then degraded further into small acid-soluble oligonucleotides. The sequence is that of Exodeoxyribonuclease 7 large subunit from Chelativorans sp. (strain BNC1).